Here is a 334-residue protein sequence, read N- to C-terminus: Phospholipase A1 1 (334 aa).

A signal peptide spans 1–23; sequence MMNLKYLLFFCLVQALHYCYAYG. Positions 24–33 are excised as a propeptide; sequence DPSLSNELDR. The cysteines at positions 37 and 120 are disulfide-linked. The active-site Nucleophile is S170. Catalysis depends on D198, which acts as the Charge relay system. 2 cysteine pairs are disulfide-bonded: C209/C214 and C252/C261. The active-site Charge relay system is H263. 3 disulfide bridges follow: C278–C302, C279–C327, and C295–C300.

This sequence belongs to the AB hydrolase superfamily. Lipase family. Post-translationally, not glycosylated. As to expression, expressed by the venom gland.

It localises to the secreted. The catalysed reaction is a 1,2-diacyl-sn-glycero-3-phosphocholine + H2O = a 2-acyl-sn-glycero-3-phosphocholine + a fatty acid + H(+). Its function is as follows. Catalyzes the hydrolysis of phosphatidylcholine with phospholipase A1 activity (3.6 U/ml). May act as an allergen and induce hemolytic activity. In vivo, a mixture of this protein and Ves a 1.02 is able to paralyze crickets. This Vespa affinis (Lesser banded hornet) protein is Phospholipase A1 1.